We begin with the raw amino-acid sequence, 179 residues long: Pyridoxal 5'-phosphate synthase subunit PdxT (179 aa).

L-glutamine is bound at residue Gly-48–Ser-50. Cys-79 (nucleophile) is an active-site residue. Residues Arg-101 and Ile-127 to Arg-128 each bind L-glutamine. Residues His-163 and Glu-165 each act as charge relay system in the active site.

It belongs to the glutaminase PdxT/SNO family. As to quaternary structure, in the presence of PdxS, forms a dodecamer of heterodimers. Only shows activity in the heterodimer.

The enzyme catalyses aldehydo-D-ribose 5-phosphate + D-glyceraldehyde 3-phosphate + L-glutamine = pyridoxal 5'-phosphate + L-glutamate + phosphate + 3 H2O + H(+). It catalyses the reaction L-glutamine + H2O = L-glutamate + NH4(+). It participates in cofactor biosynthesis; pyridoxal 5'-phosphate biosynthesis. Functionally, catalyzes the hydrolysis of glutamine to glutamate and ammonia as part of the biosynthesis of pyridoxal 5'-phosphate. The resulting ammonia molecule is channeled to the active site of PdxS. This Francisella tularensis subsp. tularensis (strain FSC 198) protein is Pyridoxal 5'-phosphate synthase subunit PdxT.